Reading from the N-terminus, the 104-residue chain is Thioredoxin (104 aa).

One can recognise a Thioredoxin domain in the interval 2-104 (KQVSDASFEE…KLFEWVEASV (103 aa)). An intrachain disulfide couples C29 to C32.

This sequence belongs to the thioredoxin family.

Participates in various redox reactions through the reversible oxidation of its active center dithiol to a disulfide and catalyzes dithiol-disulfide exchange reactions. This is Thioredoxin (trxA) from Rhodospirillum rubrum.